A 226-amino-acid chain; its full sequence is Uracil-DNA glycosylase (226 aa).

Residue Asp68 is the Proton acceptor of the active site.

The protein belongs to the uracil-DNA glycosylase (UDG) superfamily. UNG family.

It is found in the cytoplasm. It carries out the reaction Hydrolyzes single-stranded DNA or mismatched double-stranded DNA and polynucleotides, releasing free uracil.. Functionally, excises uracil residues from the DNA which can arise as a result of misincorporation of dUMP residues by DNA polymerase or due to deamination of cytosine. This is Uracil-DNA glycosylase from Mycobacteroides abscessus (strain ATCC 19977 / DSM 44196 / CCUG 20993 / CIP 104536 / JCM 13569 / NCTC 13031 / TMC 1543 / L948) (Mycobacterium abscessus).